The chain runs to 352 residues: N-acetyl-gamma-glutamyl-phosphate reductase (352 aa).

Cysteine 155 is an active-site residue.

The protein belongs to the NAGSA dehydrogenase family. Type 1 subfamily.

Its subcellular location is the cytoplasm. The enzyme catalyses N-acetyl-L-glutamate 5-semialdehyde + phosphate + NADP(+) = N-acetyl-L-glutamyl 5-phosphate + NADPH + H(+). It functions in the pathway amino-acid biosynthesis; L-arginine biosynthesis; N(2)-acetyl-L-ornithine from L-glutamate: step 3/4. Functionally, catalyzes the NADPH-dependent reduction of N-acetyl-5-glutamyl phosphate to yield N-acetyl-L-glutamate 5-semialdehyde. This is N-acetyl-gamma-glutamyl-phosphate reductase from Acaryochloris marina (strain MBIC 11017).